The primary structure comprises 728 residues: Golgin subfamily A member 5 (728 aa).

Ser2 is subject to N-acetylserine. Residues 2–695 (SWFADLAGRA…IFLRRYPIAR (694 aa)) lie on the Cytoplasmic side of the membrane. Dimethylated arginine is present on residues Arg27 and Arg89. Residues 88–202 (SRTGGDASHP…KKSTEESTVS (115 aa)) form a disordered region. Position 116 is a phosphoserine (Ser116). A compositionally biased stretch (basic and acidic residues) spans 134–146 (PTGRVEIKKEKGK). Over residues 152 to 167 (SSQSSAVSSVTTSVTT) the composition is skewed to low complexity. Residues 173–187 (ENSGSQSPEVSSSDS) are compositionally biased toward polar residues. A coiled-coil region spans residues 216-628 (GSMSHELSNL…LEQQLHSAAT (413 aa)). A helical; Anchor for type IV membrane protein transmembrane segment spans residues 696 to 716 (VFVIIYMALLHLWVMIVLLTY). The Lumenal portion of the chain corresponds to 717-728 (SPEMHHDQPYGK).

As to quaternary structure, homodimer. Interacts with RAB1A that has been activated by GTP-binding. Interacts with isoform CASP of CUX1. Post-translationally, highly phosphorylated during mitosis. Phosphorylation is barely detectable during interphase.

It localises to the golgi apparatus membrane. In terms of biological role, involved in maintaining Golgi structure. Stimulates the formation of Golgi stacks and ribbons. Involved in intra-Golgi retrograde transport. The polypeptide is Golgin subfamily A member 5 (Golga5) (Rattus norvegicus (Rat)).